The primary structure comprises 364 residues: Putative protein C31H2.4 (364 aa).

2 VOC domains span residues 6–134 (AIHH…LGEF) and 161–320 (LMDH…IFSK). Residues His164, His248, and Glu331 each coordinate Fe cation.

Belongs to the 4HPPD family. Fe cation is required as a cofactor.

The sequence is that of Putative protein C31H2.4 from Caenorhabditis elegans.